We begin with the raw amino-acid sequence, 161 residues long: Transcriptional repressor NrdR (161 aa).

Polar residues predominate over residues M1–T11. The segment at M1 to E20 is disordered. The segment at C3–C34 is a zinc-finger region. The ATP-cone domain maps to L49–D139.

This sequence belongs to the NrdR family. Zn(2+) serves as cofactor.

Functionally, negatively regulates transcription of bacterial ribonucleotide reductase nrd genes and operons by binding to NrdR-boxes. In Bradyrhizobium sp. (strain ORS 278), this protein is Transcriptional repressor NrdR.